Consider the following 193-residue polypeptide: p53 apoptosis effector related to PMP-22 (193 aa).

The next 4 helical transmembrane spans lie at 12-32, 79-99, 110-130, and 151-171; these read RWIL…ALAG, AMLF…FFAL, VIGG…VIYP, and WAYG…FFFC.

This sequence belongs to the TMEM47 family. (Microbial infection) Interacts with S.typhimurium sipA and sctB1/sipC. As to expression, expressed in skin, heart, placental, liver, pancreas, keratinocytes and dermal fibroblasts. May translocate to the intestinal apical epithelial cell surface via sipA and sctB1/sipC-promoted exocytic translocation following infection by S. Typhimurium.

The protein localises to the cell junction. Its subcellular location is the desmosome. The protein resides in the cell membrane. It is found in the cytoplasm. Component of intercellular desmosome junctions. Plays a role in stratified epithelial integrity and cell-cell adhesion by promoting desmosome assembly. Thereby plays a role in barrier function of the skin against infection. Plays a role in mammary epithelial tissue homeostasis and remodeling during and after pregnancy, potentially via its involvement in desmosome cell-cell junctions. Required for tooth enamel development via facilitating desmosome-mediated ameloblast adhesion to the stratum intermedium during the transitional stage of amelogenesis. May also play a role in downstream transcriptional regulation of other genes involved in amelogenesis such as AMBN, ENAM, MMP20 and KLK4. Plays a role as an effector in the TP53-dependent apoptotic pathway. Positively regulates apoptosis in T-helper 17 (Th17) cell populations via caspase-dependent signaling. Promotes neutrophil transepithelial migration in response to chemoattractants such as hepoxilin A3 (HXA3), N-Formylmethionyl-leucyl-phenylalanine (fMLP) and CXCL8/IL-8. Required for neutrophil transepithelial migration in response to S.typhimurium infection. May act as a positive regulator of endothelial cell apoptosis in response to blood flow-derived shear stress. This chain is p53 apoptosis effector related to PMP-22, found in Homo sapiens (Human).